Here is a 76-residue protein sequence, read N- to C-terminus: Exodeoxyribonuclease 7 small subunit (76 aa).

The protein belongs to the XseB family. In terms of assembly, heterooligomer composed of large and small subunits.

The protein localises to the cytoplasm. The enzyme catalyses Exonucleolytic cleavage in either 5'- to 3'- or 3'- to 5'-direction to yield nucleoside 5'-phosphates.. Its function is as follows. Bidirectionally degrades single-stranded DNA into large acid-insoluble oligonucleotides, which are then degraded further into small acid-soluble oligonucleotides. In Gluconacetobacter diazotrophicus (strain ATCC 49037 / DSM 5601 / CCUG 37298 / CIP 103539 / LMG 7603 / PAl5), this protein is Exodeoxyribonuclease 7 small subunit.